We begin with the raw amino-acid sequence, 272 residues long: Secretagogin (272 aa).

6 EF-hand domains span residues 8–43 (LDAA…MLKK), 53–89 (ERVQ…QEEN), 101–136 (DNSV…LFLQ), 145–180 (KLDE…QENF), 193–228 (ERKR…MMEL), and 237–272 (DLDK…KHKP). Residues aspartate 21, aspartate 23, asparagine 25, tyrosine 27, and glutamate 32 each contribute to the Ca(2+) site. Ca(2+) is bound by residues aspartate 114, aspartate 116, serine 118, tyrosine 120, glutamate 125, aspartate 158, asparagine 160, aspartate 162, arginine 164, aspartate 169, aspartate 206, serine 208, threonine 210, glutamate 217, aspartate 250, asparagine 252, aspartate 254, lysine 256, and glutamate 261.

Its subcellular location is the cytoplasm. The protein is Secretagogin (scgn) of Danio rerio (Zebrafish).